A 275-amino-acid polypeptide reads, in one-letter code: Large ribosomal subunit protein uL2c (275 aa).

The segment at 28-53 is disordered; that stretch reads TPTKSLTHANHRARGRNHSGSITTRW.

This sequence belongs to the universal ribosomal protein uL2 family. As to quaternary structure, part of the 50S ribosomal subunit.

It is found in the plastid. The protein resides in the chloroplast. This is Large ribosomal subunit protein uL2c (rpl2) from Nephroselmis olivacea (Green alga).